We begin with the raw amino-acid sequence, 975 residues long: Cation-chloride cotransporter 1 (975 aa).

Disordered regions lie at residues 1 to 29 and 104 to 124; these read MDSGDIEEAGGNGEEEFRSGPRLGGSKYR and EQIQAPSSPRDGEDISITQGH. At 1-132 the chain is on the cytoplasmic side; that stretch reads MDSGDIEEAG…GHPKPPALKM (132 aa). Residues 133–153 form a helical membrane-spanning segment; it reads GTMMGVFVPCLQNILGIIYYI. The Extracellular portion of the chain corresponds to 154 to 167; the sequence is RFTWIVGMAGIGQG. The chain crosses the membrane as a helical span at residues 168–188; the sequence is LVLVFLCGLCTFLTTISLSAI. Residues 189-214 are Cytoplasmic-facing; it reads ATNGAMKGGGPYYLIGRALGPEVGIS. The helical transmembrane segment at 215-235 threads the bilayer; the sequence is IGLCFFLGNAVAGALYVLGAV. Topologically, residues 236–273 are extracellular; it reads ETFLKAFPAAGIFRETITKVNGTAVSESIQSPNSHDLQ. Asn256 carries an N-linked (GlcNAc...) asparagine glycan. Residues 274–294 form a helical membrane-spanning segment; that stretch reads VYGIVVTILLCFIVFGGVKMI. The Cytoplasmic segment spans residues 295–296; sequence NR. The chain crosses the membrane as a helical span at residues 297-317; the sequence is VAPAFLVPVLLSIFCIFIGIF. Over 318-359 the chain is Extracellular; it reads LAKTDDPDNGITGLRLKSFKDNWGSAYQMTNDAGIPDPTGGT. The helical transmembrane segment at 360–380 threads the bilayer; that stretch reads YWSFNELVGLFFPAVTGIMAG. Over 381–398 the chain is Cytoplasmic; sequence SNRSASLKDTQKSIPVGT. The chain crosses the membrane as a helical span at residues 399 to 419; sequence LAATLTTTSLYLISVLFFGAV. The Extracellular portion of the chain corresponds to 420–434; that stretch reads ATRDKLLTDRLLTAT. The chain crosses the membrane as a helical span at residues 435–455; that stretch reads IAWPFPAIVHVGIILSTLGAA. The Cytoplasmic portion of the chain corresponds to 456-490; it reads LQSLTGAPRLLAAIANDDILPILNYFKVADTSEPH. Residues 491 to 511 form a helical membrane-spanning segment; the sequence is IATLFTAFICIGCVVIGNLDL. The Extracellular segment spans residues 512-515; that stretch reads ITPT. A helical membrane pass occupies residues 516–536; the sequence is VTMFYLLCYSGVNLSCFLLDL. Over 537–544 the chain is Cytoplasmic; sequence LDAPSWRP. Residues 545–565 form a helical membrane-spanning segment; the sequence is RWKYHHWSLSFVGASLCIVIM. Over 566 to 571 the chain is Extracellular; sequence FLISWS. Residues 572–592 traverse the membrane as a helical segment; that stretch reads FTVVAIALASLIYKYVGLKGK. At 593 to 975 the chain is on the cytoplasmic side; it reads AGDWGDGFKS…YHRDVVTLFT (383 aa).

This sequence belongs to the SLC12A transporter family. As to expression, expressed in young seedlings cotyledon tips, plant vasculature, root tips and axillary buds. Expressed in root vascular strand in the pericycle and other parenchyma cells bordering xylem vessels. Expressed in the xylem/symplast boundaries of rosette stems, rosette leaves and cauline leaves. Expressed in stipules, trichomes and hydathodes. Expressed in pollen grains.

It localises to the membrane. Cation/chloride cotransporter that mediates potassium-chloride and sodium-chloride cotransports. Involved in plant development and Cl(-) homeostasis. May be involved in long distance Cl(-) transport. Does not function as an H(+)-dependent cotransporter. The sequence is that of Cation-chloride cotransporter 1 (CCC1) from Arabidopsis thaliana (Mouse-ear cress).